A 1412-amino-acid polypeptide reads, in one-letter code: DNA-directed RNA polymerase subunit beta' (1412 aa).

The Zn(2+) site is built by cysteine 71, cysteine 73, cysteine 86, and cysteine 89. Mg(2+) contacts are provided by aspartate 461, aspartate 463, and aspartate 465. Zn(2+) contacts are provided by cysteine 815, cysteine 889, cysteine 896, and cysteine 899.

Belongs to the RNA polymerase beta' chain family. In terms of assembly, the RNAP catalytic core consists of 2 alpha, 1 beta, 1 beta' and 1 omega subunit. When a sigma factor is associated with the core the holoenzyme is formed, which can initiate transcription. Mg(2+) serves as cofactor. It depends on Zn(2+) as a cofactor.

The enzyme catalyses RNA(n) + a ribonucleoside 5'-triphosphate = RNA(n+1) + diphosphate. Its function is as follows. DNA-dependent RNA polymerase catalyzes the transcription of DNA into RNA using the four ribonucleoside triphosphates as substrates. In Actinobacillus pleuropneumoniae serotype 5b (strain L20), this protein is DNA-directed RNA polymerase subunit beta'.